We begin with the raw amino-acid sequence, 454 residues long: Death-associated protein kinase 3 (454 aa).

Positions 13–275 (YEMGEELGSG…IAQSLEHSWI (263 aa)) constitute a Protein kinase domain. Residues 19–27 (LGSGQFAIV) and Lys42 each bind ATP. Phosphoserine; by autocatalysis is present on Ser50. Positions 94 and 96 each coordinate pyridone 6. The active-site Proton acceptor is Asp139. Positions 161–204 (DFGIAHKIEAGNEFKNIFGTPEFVAPEIVNYEPLGLEADMWSIG) are activation segment. Phosphothreonine is present on residues Thr180 and Thr225. A Phosphothreonine; by autocatalysis and ROCK1 modification is found at Thr265. Thr299 is modified (phosphothreonine; by autocatalysis, DAPK1 and ROCK1). Position 306 is a phosphothreonine; by autocatalysis (Thr306). Position 309 is a phosphoserine; by DAPK1 (Ser309). Phosphoserine; by autocatalysis and DAPK1 is present on Ser311. 3 positions are modified to phosphoserine; by DAPK1: Ser312, Ser318, and Ser326. The interval 427–441 (VASEMRFVQDLVRAL) is leucine-zipper.

It belongs to the protein kinase superfamily. CAMK Ser/Thr protein kinase family. DAP kinase subfamily. In terms of assembly, homooligomer in its kinase-active form (homotrimers and homodimers are reported); monomeric in its kinase-inactive form. Homodimerization is required for activation segment autophosphorylation. Isoform 1 and isoform 2 interact with myosin and PPP1R12A; interaction of isoform 1 with PPP1R12A is inhibited by RhoA dominant negative form. Interacts with NLK, DAXX, STAT3, RHOD (GTP-bound form) and TCP10L. Interacts with PAWR; the interaction is reported conflictingly: according to PubMed:17953487 does not interact with PAWR. Interacts with ULK1; may be a substrate of ULK1. Interacts with LUZP1; the interaction is likely to occur throughout the cell cycle and reduces the LUZP1-mediated suppression of MYL9 phosphorylation. Mg(2+) is required as a cofactor. The phosphorylation status is critical for kinase activity, oligomerization and intracellular localization. Phosphorylation at Thr-180, Thr-225 and Thr-265 is essential for activity. The phosphorylated form is localized in the cytoplasm promoted by phosphorylation at Thr-299; nuclear translocation or retention is maximal when it is not phosphorylated. Phosphorylation increases the trimeric form, and its dephosphorylation favors a kinase-inactive monomeric form. Both isoform 1 and isoform 2 can undergo autophosphorylation. In terms of tissue distribution, widely expressed. Isoform 1 and isoform 2 are expressed in the bladder smooth muscle.

The protein localises to the nucleus. Its subcellular location is the PML body. It is found in the cytoplasm. It localises to the cytoskeleton. The protein resides in the microtubule organizing center. The protein localises to the centrosome. Its subcellular location is the chromosome. It is found in the centromere. It localises to the spindle. The protein resides in the midbody. The enzyme catalyses L-seryl-[protein] + ATP = O-phospho-L-seryl-[protein] + ADP + H(+). The catalysed reaction is L-threonyl-[protein] + ATP = O-phospho-L-threonyl-[protein] + ADP + H(+). With respect to regulation, a sequential activation is proposed: autophosphorylation at consensus sites is leading to dimerization of the catalytic domain stabilized by phosphorylation at Ser-50 and activation segment exchange (producing an active confirmation of both kinase modules in trans) followed by phosphorylation at Thr-180 in the activation segment and at other regulatory sites. Phosphorylation at Thr-180, Thr-225 and Thr-265 is essential for activity. Oligomerization is required for full enzymatic activity. Inhibited by pyridone-6 (K00225), a potent, ATP-competitive inhibitor. Functionally, serine/threonine kinase which is involved in the regulation of apoptosis, autophagy, transcription, translation and actin cytoskeleton reorganization. Involved in the regulation of smooth muscle contraction. Regulates both type I (caspase-dependent) apoptotic and type II (caspase-independent) autophagic cell deaths signal, depending on the cellular setting. Involved in regulation of starvation-induced autophagy. Regulates myosin phosphorylation in both smooth muscle and non-muscle cells. In smooth muscle, regulates myosin either directly by phosphorylating MYL12B and MYL9 or through inhibition of smooth muscle myosin phosphatase (SMPP1M) via phosphorylation of PPP1R12A; the inhibition of SMPP1M functions to enhance muscle responsiveness to Ca(2+) and promote a contractile state. Phosphorylates MYL12B in non-muscle cells leading to reorganization of actin cytoskeleton. Isoform 2 can phosphorylate myosin, PPP1R12A and MYL12B. Overexpression leads to condensation of actin stress fibers into thick bundles. Involved in actin filament focal adhesion dynamics. The function in both reorganization of actin cytoskeleton and focal adhesion dissolution is modulated by RhoD. Positively regulates canonical Wnt/beta-catenin signaling through interaction with NLK and TCF7L2. Phosphorylates RPL13A on 'Ser-77' upon interferon-gamma activation which is causing RPL13A release from the ribosome, RPL13A association with the GAIT complex and its subsequent involvement in transcript-selective translation inhibition. Enhances transcription from AR-responsive promoters in a hormone- and kinase-dependent manner. Involved in regulation of cell cycle progression and cell proliferation. May be a tumor suppressor. The polypeptide is Death-associated protein kinase 3 (DAPK3) (Homo sapiens (Human)).